Consider the following 330-residue polypeptide: Laforin (330 aa).

Residues 1–123 (MLFRFGVVVP…DNLVDGVYCL (123 aa)) form the CBM20 domain. Serine 25 carries the post-translational modification Phosphoserine; by AMPK. Substrate contacts are provided by residues tryptophan 32, lysine 86, 102 to 106 (GPHHD), aspartate 196, aspartate 234, and arginine 240. Residues 155-322 (HYSRILPNIW…QQDFSQKFGK (168 aa)) form the Tyrosine-protein phosphatase domain. Cysteine 265 serves as the catalytic Phosphocysteine intermediate. A Glucan phosphatase signature motif CXAGXGR motif is present at residues 265 to 271 (CNAGVGR). Residues 266-271 (NAGVGR) and tyrosine 303 each bind substrate.

The protein belongs to the protein-tyrosine phosphatase family. Homodimer. Interacts with PPP1R3B, PPP1R3C, HIRIP5, and EPM2AIP1. Binds glycogen and Lafora bodies. Interacts with NHLRC1/malin (via the NHL repeats). Forms a complex with NHLRC1/malin and HSP70. Interacts with PPP1R3D; in the presence of NHLC1/malin the interaction leads to ubiquitination and autophagic degradation of PPP1R3D. Interacts (via the phosphatase domain) with MAPT/Tau; the interaction dephosphorylates MAPT. Interacts with PRDM8. Post-translationally, polyubiquitinated by NHLRC1/malin. Phosphorylation on Ser-25 by AMPK affects the phosphatase activity of the enzyme and its ability to homodimerize and interact with NHLRC1, PPP1R3C or PRKAA2. In terms of tissue distribution, detected in skeletal muscle and in brain (at protein level). Widely expressed. Higher levels of expression are found in heart, brain, liver, skeletal muscle and kidney.

Its subcellular location is the cytoplasm. The protein resides in the endoplasmic reticulum membrane. The protein localises to the cell membrane. It catalyses the reaction O-phospho-L-tyrosyl-[protein] + H2O = L-tyrosyl-[protein] + phosphate. The enzyme catalyses O-phospho-L-seryl-[protein] + H2O = L-seryl-[protein] + phosphate. The catalysed reaction is O-phospho-L-threonyl-[protein] + H2O = L-threonyl-[protein] + phosphate. Its function is as follows. Plays an important role in preventing glycogen hyperphosphorylation and the formation of insoluble aggregates, via its activity as glycogen phosphatase, and by promoting the ubiquitination of proteins involved in glycogen metabolism via its interaction with the E3 ubiquitin ligase NHLRC1/malin. Dephosphorylates phosphotyrosine and synthetic substrates, such as para-nitrophenylphosphate (pNPP), and has low activity with phosphoserine and phosphothreonine substrates (in vitro). Has also been shown to dephosphorylate MAPT. Shows strong phosphatase activity towards complex carbohydrates in vitro, avoiding glycogen hyperphosphorylation which is associated with reduced branching and formation of insoluble aggregates. Forms a complex with NHLRC1/malin and HSP70, which suppresses the cellular toxicity of misfolded proteins by promoting their degradation through the ubiquitin-proteasome system (UPS). Acts as a scaffold protein to facilitate PPP1R3C/PTG ubiquitination by NHLRC1/malin. Also promotes proteasome-independent protein degradation through the macroautophagy pathway. This is Laforin (Epm2a) from Mus musculus (Mouse).